The sequence spans 286 residues: Eukaryotic translation initiation factor 3 subunit F-2 (286 aa).

Positions 11 to 147 (ILLQPLVLLH…MRLYTAVVMG (137 aa)) constitute an MPN domain.

The protein belongs to the eIF-3 subunit F family. As to quaternary structure, component of the eukaryotic translation initiation factor 3 (eIF-3) complex. The eIF-3 complex interacts with pix.

Its subcellular location is the cytoplasm. Component of the eukaryotic translation initiation factor 3 (eIF-3) complex, which is involved in protein synthesis of a specialized repertoire of mRNAs and, together with other initiation factors, stimulates binding of mRNA and methionyl-tRNAi to the 40S ribosome. The eIF-3 complex specifically targets and initiates translation of a subset of mRNAs involved in cell proliferation. The chain is Eukaryotic translation initiation factor 3 subunit F-2 from Drosophila willistoni (Fruit fly).